Reading from the N-terminus, the 354-residue chain is cAMP-dependent protein kinase catalytic subunit 2 (354 aa).

The 257-residue stretch at 45-301 (YITRAVLGNG…SSDVKSHPWF (257 aa)) folds into the Protein kinase domain. ATP-binding positions include 51–59 (LGNGSFGTV) and Lys74. Asp168 acts as the Proton acceptor in catalysis. The AGC-kinase C-terminal domain occupies 302 to 354 (QGVDWFGILNQEVTAPYQPTISGAEDLSNFENFEFKDRYKSRINRHPELFANF).

The protein belongs to the protein kinase superfamily. AGC Ser/Thr protein kinase family. cAMP subfamily. In terms of tissue distribution, more abundant in adult body than adult head.

The catalysed reaction is L-seryl-[protein] + ATP = O-phospho-L-seryl-[protein] + ADP + H(+). The enzyme catalyses L-threonyl-[protein] + ATP = O-phospho-L-threonyl-[protein] + ADP + H(+). In Drosophila melanogaster (Fruit fly), this protein is cAMP-dependent protein kinase catalytic subunit 2 (Pka-C2).